We begin with the raw amino-acid sequence, 1098 residues long: Contactin-5 (1098 aa).

Positions 1 to 23 (MASCWRLILFLSVTRWLSDYSEA) are cleaved as a signal peptide. Ig-like C2-type domains lie at 98 to 189 (PVFV…ATLQ), 195 to 281 (NFSG…RVLS), 299 to 384 (PKIE…GQLQ), 389 to 473 (PHWV…AELK), 479 to 568 (PSFE…LSVK), and 570 to 659 (PTRI…DSVS). A disulfide bridge links Cys122 with Cys172. 2 N-linked (GlcNAc...) asparagine glycosylation sites follow: Asn137 and Asn195. Disulfide bonds link Cys216–Cys268 and Cys321–Cys368. N-linked (GlcNAc...) asparagine glycosylation is found at Asn396, Asn448, and Asn539. 3 disulfide bridges follow: Cys410–Cys457, Cys502–Cys550, and Cys592–Cys649. Fibronectin type-III domains follow at residues 672–770 (PPGV…TNEA), 775–872 (APSN…SAEG), 877–971 (APTD…TKRH), and 976–1066 (PPGN…SYSG). Asn778, Asn815, and Asn930 each carry an N-linked (GlcNAc...) asparagine glycan. A disordered region spans residues 956 to 982 (GYGPPSREASTTTKRHPPREPPGNLRW). Residue Asn1001 is glycosylated (N-linked (GlcNAc...) asparagine). Ser1071 is lipidated: GPI-anchor amidated serine. Residues 1072 to 1098 (AQSTLHSLSKWSSVTLLLALMLPSSSW) constitute a propeptide, removed in mature form.

The protein belongs to the immunoglobulin superfamily. Contactin family. In terms of assembly, interacts with PTPRG. Expressed in the nervous system. Preferentially expressed in the central auditory pathways.

Its subcellular location is the cell membrane. Its function is as follows. Contactins mediate cell surface interactions during nervous system development. Has some neurite outgrowth-promoting activity in the cerebral cortical neurons but not in hippocampal neurons. Involved in neuronal activity in the auditory system. This Mus musculus (Mouse) protein is Contactin-5 (Cntn5).